We begin with the raw amino-acid sequence, 310 residues long: Protoheme IX farnesyltransferase (310 aa).

9 helical membrane-spanning segments follow: residues 26-46 (VMSL…ATVH), 47-67 (PMIA…SGAL), 95-115 (GEAL…LGLA), 118-138 (LFAA…YSMW), 147-167 (IVIG…VATG), 174-194 (LFMF…LALF), 220-240 (VLAY…TGIG), 243-263 (LYLV…VRIW), and 281-301 (FFRF…AEAA).

Belongs to the UbiA prenyltransferase family. Protoheme IX farnesyltransferase subfamily. Interacts with CtaA.

The protein localises to the cell inner membrane. It carries out the reaction heme b + (2E,6E)-farnesyl diphosphate + H2O = Fe(II)-heme o + diphosphate. The protein operates within porphyrin-containing compound metabolism; heme O biosynthesis; heme O from protoheme: step 1/1. In terms of biological role, converts heme B (protoheme IX) to heme O by substitution of the vinyl group on carbon 2 of heme B porphyrin ring with a hydroxyethyl farnesyl side group. This chain is Protoheme IX farnesyltransferase, found in Cereibacter sphaeroides (strain ATCC 17025 / ATH 2.4.3) (Rhodobacter sphaeroides).